The sequence spans 436 residues: Septin-7 (436 aa).

The residue at position 2 (serine 2) is an N-acetylserine. Phosphotyrosine is present on tyrosine 29. The Septin-type G domain occupies 46 to 315 (RGFEFTLMVV…ENYRSRKLAA (270 aa)). Residues 46–316 (RGFEFTLMVV…NYRSRKLAAV (271 aa)) form an interaction with SEPTIN12 region. Residues 56–63 (GESGLGKS) form a G1 motif region. 56–63 (GESGLGKS) is a binding site for GTP. The residue at position 76 (serine 76) is a Phosphoserine. GTP is bound by residues threonine 89, glycine 115, and 194-202 (KADTLTPEE). The segment at 112–115 (DTPG) is G3 motif. Positions 193-196 (AKAD) are G4 motif. A Phosphothreonine modification is found at threonine 227. The GTP site is built by glycine 249 and arginine 264. The stretch at 331–436 (TKSPLAQMEE…EKNKKKGKIF (106 aa)) forms a coiled coil. The residue at position 333 (serine 333) is a Phosphoserine. Lysine 372 is modified (N6-acetyllysine). The span at 377–409 (ELQRRHEQMKKNLEAQHKELEEKRRQFEEEKAN) shows a compositional bias: basic and acidic residues. A disordered region spans residues 377–436 (ELQRRHEQMKKNLEAQHKELEEKRRQFEEEKANWEAQQRILEQQNSSRTLEKNKKKGKIF). Phosphoserine is present on serine 423. Threonine 425 is subject to Phosphothreonine.

The protein belongs to the TRAFAC class TrmE-Era-EngA-EngB-Septin-like GTPase superfamily. Septin GTPase family. In terms of assembly, septins polymerize into heterooligomeric protein complexes that form filaments, and associate with cellular membranes, actin filaments and microtubules. GTPase activity is required for filament formation. Filaments are assembled from asymmetrical heterotrimers, composed of SEPTIN2, SEPTIN6 and SEPTIN7 that associate head-to-head to form a hexameric unit. Within the trimer, directly interacts with SEPTIN6, while interaction with SEPTIN2 seems indirect. In the absence of SEPTIN6, forms homodimers. Interacts directly with CENPE and links CENPE to septin filaments composed of SEPTIN2, SEPTIN6 and SEPTIN7. Interacts with SEPTIN5. Component of a septin core octameric complex consisting of SEPTIN12, SEPTIN7, SEPTIN6 and SEPTIN2 or SEPTIN4 in the order 12-7-6-2-2-6-7-12 or 12-7-6-4-4-6-7-12 and located in the sperm annulus; the SEPTIN12:SEPTIN7 association is mediated by the respective GTP-binding domains. Interacts with SEPTIN2, SEPTIN7, SEPTIN8, SEPTIN9 and SEPTIN11.

It is found in the cytoplasm. The protein localises to the chromosome. The protein resides in the centromere. It localises to the kinetochore. Its subcellular location is the cytoskeleton. It is found in the spindle. The protein localises to the cleavage furrow. The protein resides in the midbody. It localises to the cilium axoneme. Its subcellular location is the cell projection. It is found in the cilium. The protein localises to the flagellum. In terms of biological role, filament-forming cytoskeletal GTPase. Required for normal organization of the actin cytoskeleton. Required for normal progress through mitosis. Involved in cytokinesis. Required for normal association of CENPE with the kinetochore. Plays a role in ciliogenesis and collective cell movements. Forms a filamentous structure with SEPTIN12, SEPTIN6, SEPTIN2 and probably SEPTIN4 at the sperm annulus which is required for the structural integrity and motility of the sperm tail during postmeiotic differentiation. In Rattus norvegicus (Rat), this protein is Septin-7.